The sequence spans 180 residues: MIGSLVATAFWAMLPAYVPNNAAVLAGGGRPIDGGRDWRGARLLGDGKTWRGTAVGTLTGVVLALALNRIAEPASAALGVDLPTFALPAAFALAFGAMCGDIGASFLKRRSGRERGAAFPGLDQLDFVVVALAAVFVVDTDWALAVFTPSVLVVVLVMTPILHVVTNVGAYALGLKNEPW.

Transmembrane regions (helical) follow at residues 5–25, 54–74, 78–98, 118–138, and 142–162; these read LVAT…AAVL, AVGT…AEPA, LGVD…FGAM, AFPG…VFVV, and WALA…TPIL.

Belongs to the CDP-archaeol synthase family. Requires Mg(2+) as cofactor.

It localises to the cell membrane. The catalysed reaction is 2,3-bis-O-(geranylgeranyl)-sn-glycerol 1-phosphate + CTP + H(+) = CDP-2,3-bis-O-(geranylgeranyl)-sn-glycerol + diphosphate. It participates in membrane lipid metabolism; glycerophospholipid metabolism. Catalyzes the formation of CDP-2,3-bis-(O-geranylgeranyl)-sn-glycerol (CDP-archaeol) from 2,3-bis-(O-geranylgeranyl)-sn-glycerol 1-phosphate (DGGGP) and CTP. This reaction is the third ether-bond-formation step in the biosynthesis of archaeal membrane lipids. This is CDP-archaeol synthase from Halorubrum lacusprofundi (strain ATCC 49239 / DSM 5036 / JCM 8891 / ACAM 34).